The chain runs to 355 residues: BAG family molecular chaperone regulator 1 (355 aa).

Positions 1–112 (MAGRSAARRP…KNVTGTQVEE (112 aa)) are disordered. The span at 26-39 (PAREPRQSESRAER) shows a compositional bias: basic and acidic residues. 2 stretches are compositionally biased toward polar residues: residues 80 to 91 (SSQSEKVGSSSR) and 102 to 111 (SKNVTGTQVE). Tandem repeats lie at residues 103-108 (KNVTGT), 111-116 (EEVTKI), 117-122 (EEATQT), 123-128 (EEVTVA), 129-134 (EEVTQT), 141-146 (EEMVQT), and 147-152 (EEMETP). The interval 111–209 (EEVTKIEEAT…LIFKGKSLKE (99 aa)) is 7 X 6 AA tandem repeat of E-E-X(4). The disordered stretch occupies residues 132–151 (TQTDNMAKTEEMVQTEEMET). Residues 154-234 (LSVIVTHSNE…VMLIGEKSNP (81 aa)) enclose the Ubiquitin-like domain. Positions 182 to 229 (DLAQLVEEATGVPLPFQKLIFKGKSLKEMETPLSALGMQNGCRVMLIG) are interaction with HSPA8. An interaction with PPP1R15A region spans residues 226–355 (MLIGEKSNPE…LQSTNLALAE (130 aa)). One can recognise a BAG domain in the interval 256-336 (HLQELNKELS…VFLAECDTVE (81 aa)).

As to quaternary structure, homodimer. Forms a heteromeric complex with HSP70/HSC70. Binds to the ATPase domain of HSP/HSC70 chaperones. Interacts with NR3C1. Interacts with the N-terminal region of MAPRE2. Interacts with PPP1R15A. Interacts with BCL2 in an ATP-dependent manner. Interacts with SIAH1, HSPA8 (via NBD), HSPA1A (via NBD) and HSPA1B (via NBD). Interacts with SIAH2. Interacts with ESR1; the interaction is promoted in the absence of estradiol (17-beta-estradiol/E2). In terms of processing, ubiquitinated; mediated by SIAH1 or SIAH2 and leading to its subsequent proteasomal degradation. As to expression, isoform 2 is expressed in the heart, lung, kidney and spinal cord. Isoform 1 and isoform 2 are expressed in hematopoietic cell lines. The levels of isoform 2 are relatively constant in all the cell lines examined while the levels of isoform 1 are more variable (at protein level). Isoform 1 is expressed in the lung and kidney. Isoform 2 is expressed in various tissues, with highest levels in testis and stomach.

It is found in the nucleus. The protein localises to the cytoplasm. In terms of biological role, co-chaperone for HSP70 and HSC70 chaperone proteins. Acts as a nucleotide-exchange factor (NEF) promoting the release of ADP from the HSP70 and HSC70 proteins thereby triggering client/substrate protein release. Nucleotide release is mediated via its binding to the nucleotide-binding domain (NBD) of HSPA8/HSC70 where as the substrate release is mediated via its binding to the substrate-binding domain (SBD) of HSPA8/HSC70. Inhibits the pro-apoptotic function of PPP1R15A, and has anti-apoptotic activity. Markedly increases the anti-cell death function of BCL2 induced by various stimuli. Involved in the STUB1-mediated proteasomal degradation of ESR1 in response to age-related circulating estradiol (17-beta-estradiol/E2) decline, thereby promotes neuronal apoptosis in response to ischemic reperfusion injury. This Mus musculus (Mouse) protein is BAG family molecular chaperone regulator 1 (Bag1).